The chain runs to 118 residues: Large ribosomal subunit protein bL19 (118 aa).

Belongs to the bacterial ribosomal protein bL19 family.

Functionally, this protein is located at the 30S-50S ribosomal subunit interface and may play a role in the structure and function of the aminoacyl-tRNA binding site. The protein is Large ribosomal subunit protein bL19 of Geobacter metallireducens (strain ATCC 53774 / DSM 7210 / GS-15).